We begin with the raw amino-acid sequence, 169 residues long: uncharacterized protein (169 aa).

Residues 10-30 (YFVTILIIIIIILIVLLIVFL) form a helical membrane-spanning segment. The disordered stretch occupies residues 98 to 123 (QSKPINKNNQQTKNTPTPLDDRPDLS). Over residues 100-115 (KPINKNNQQTKNTPTP) the composition is skewed to low complexity.

The protein localises to the membrane. This is an uncharacterized protein from Acanthamoeba polyphaga (Amoeba).